Reading from the N-terminus, the 282-residue chain is Cytochrome c1 (282 aa).

A signal peptide spans 1 to 24 (MTIKLRFVASLALVFGLAAASVPA). Heme c contacts are provided by C62, C65, H66, and M207. A helical transmembrane segment spans residues 253–273 (WWVLGFLVIFTGLLVATKIVV).

The main subunits of complex b-c1 are: cytochrome b, cytochrome c1 and the Rieske protein. Binds 1 heme c group covalently per subunit.

It is found in the cell membrane. Component of the ubiquinol-cytochrome c reductase complex (complex III or cytochrome b-c1 complex), which is a respiratory chain that generates an electrochemical potential coupled to ATP synthesis. c1 functions as an electron donor to cytochrome c. The sequence is that of Cytochrome c1 (petC) from Blastochloris viridis (Rhodopseudomonas viridis).